The primary structure comprises 393 residues: NADH-quinone oxidoreductase subunit D (393 aa).

Belongs to the complex I 49 kDa subunit family. As to quaternary structure, NDH-1 is composed of 14 different subunits. Subunits NuoB, C, D, E, F, and G constitute the peripheral sector of the complex.

The protein localises to the cell inner membrane. The catalysed reaction is a quinone + NADH + 5 H(+)(in) = a quinol + NAD(+) + 4 H(+)(out). NDH-1 shuttles electrons from NADH, via FMN and iron-sulfur (Fe-S) centers, to quinones in the respiratory chain. The immediate electron acceptor for the enzyme in this species is believed to be ubiquinone. Couples the redox reaction to proton translocation (for every two electrons transferred, four hydrogen ions are translocated across the cytoplasmic membrane), and thus conserves the redox energy in a proton gradient. In Ehrlichia chaffeensis (strain ATCC CRL-10679 / Arkansas), this protein is NADH-quinone oxidoreductase subunit D.